Reading from the N-terminus, the 526-residue chain is Bifunctional purine biosynthesis protein PurH (526 aa).

The 147-residue stretch at 1-147 folds into the MGS-like domain; that stretch reads MSVIKRALIS…KNWKHVAIVT (147 aa).

This sequence belongs to the PurH family.

It carries out the reaction (6R)-10-formyltetrahydrofolate + 5-amino-1-(5-phospho-beta-D-ribosyl)imidazole-4-carboxamide = 5-formamido-1-(5-phospho-D-ribosyl)imidazole-4-carboxamide + (6S)-5,6,7,8-tetrahydrofolate. It catalyses the reaction IMP + H2O = 5-formamido-1-(5-phospho-D-ribosyl)imidazole-4-carboxamide. It functions in the pathway purine metabolism; IMP biosynthesis via de novo pathway; 5-formamido-1-(5-phospho-D-ribosyl)imidazole-4-carboxamide from 5-amino-1-(5-phospho-D-ribosyl)imidazole-4-carboxamide (10-formyl THF route): step 1/1. It participates in purine metabolism; IMP biosynthesis via de novo pathway; IMP from 5-formamido-1-(5-phospho-D-ribosyl)imidazole-4-carboxamide: step 1/1. The protein is Bifunctional purine biosynthesis protein PurH of Neisseria gonorrhoeae (strain NCCP11945).